Consider the following 464-residue polypeptide: Antithrombin-III (464 aa).

The first 32 residues, 1–32, serve as a signal peptide directing secretion; sequence MYSNVIGTVTSGKRKVYLLSLLLIGFWDCVTC. Intrachain disulfides connect Cys-40/Cys-160 and Cys-53/Cys-127. Phosphothreonine; by FAM20C is present on Thr-63. A Phosphoserine; by FAM20C modification is found at Ser-68. Trp-81 contributes to the heparin binding site. The N-linked (GlcNAc...) asparagine glycan is linked to Asn-128. Arg-161 contributes to the heparin binding site. An N-linked (GlcNAc...) asparagine glycan is attached at Asn-167. Arg-177 lines the heparin pocket. An N-linked (GlcNAc...) (complex) asparagine glycan is attached at Asn-187. Asn-224 carries an N-linked (GlcNAc...) asparagine glycan. A disulfide bridge connects residues Cys-279 and Cys-462.

The protein belongs to the serpin family. As to quaternary structure, forms protease inhibiting heterodimer with TMPRSS7. Post-translationally, phosphorylated by FAM20C in the extracellular medium. As to expression, found in plasma.

Its subcellular location is the secreted. The protein localises to the extracellular space. In terms of biological role, most important serine protease inhibitor in plasma that regulates the blood coagulation cascade. AT-III inhibits thrombin, matriptase-3/TMPRSS7, as well as factors IXa, Xa and XIa. Its inhibitory activity is greatly enhanced in the presence of heparin. This Homo sapiens (Human) protein is Antithrombin-III (SERPINC1).